The following is a 331-amino-acid chain: Mitochondrial carrier protein CoAc1 (331 aa).

6 helical membrane passes run 16-36 (LVDTLPVLAKTLIAGGAAGAI), 79-99 (FYKGNGASVIRIIPYAALHYM), 123-143 (LVAGSAAGGTAVLCTYPLDLA), 193-213 (GIGPTLIGILPYAGLKFYIYE), 231-251 (LPCGALAGLFGQTITYPLDVV), and 292-312 (FAGLSINYIKIVPSVAIGFTV). Solcar repeat units follow at residues 21–107 (PVLA…YRDW), 117–218 (SGPI…LKRH), and 225–319 (NSVR…MKSW).

This sequence belongs to the mitochondrial carrier (TC 2.A.29) family. In terms of tissue distribution, expressed throughout the plant.

The protein localises to the mitochondrion inner membrane. In terms of biological role, required for the accumulation of coenzyme A in the mitochondrial matrix. In Arabidopsis thaliana (Mouse-ear cress), this protein is Mitochondrial carrier protein CoAc1.